A 190-amino-acid chain; its full sequence is UPF0301 protein Rmet_2743 (190 aa).

Belongs to the UPF0301 (AlgH) family.

This chain is UPF0301 protein Rmet_2743, found in Cupriavidus metallidurans (strain ATCC 43123 / DSM 2839 / NBRC 102507 / CH34) (Ralstonia metallidurans).